The chain runs to 306 residues: Palmitoyl-protein thioesterase 1 (306 aa).

The N-terminal stretch at Met1 to Leu27 is a signal peptide. Cystine bridges form between Cys45–Cys46, Cys96–Cys128, and Cys152–Cys160. Residue Ser115 is part of the active site. 3 N-linked (GlcNAc...) asparagine glycosylation sites follow: Asn197, Asn212, and Asn232. Residues Asp233 and His289 contribute to the active site.

This sequence belongs to the palmitoyl-protein thioesterase family. As to quaternary structure, interacts with CLN5, ATP5F1A and ATP5F1B. In terms of processing, glycosylated. In terms of tissue distribution, highest level in testis and kidney, lower in heart, brain and lung and lowest in skeletal muscle.

The protein localises to the lysosome. Its subcellular location is the secreted. The protein resides in the golgi apparatus. It is found in the endoplasmic reticulum. The catalysed reaction is S-hexadecanoyl-L-cysteinyl-[protein] + H2O = L-cysteinyl-[protein] + hexadecanoate + H(+). It catalyses the reaction hexadecanoyl-CoA + H2O = hexadecanoate + CoA + H(+). It carries out the reaction S-hexadecanoyl-N-acetylcysteamine + H2O = N-acetylcysteamine + hexadecanoate + H(+). The enzyme catalyses S-hexadecanoyl-N-acetylcysteine methyl ester + H2O = N-acetylcysteine methyl ester + hexadecanoate + H(+). In terms of biological role, has thioesterase activity against fatty acid thioesters with 14 -18 carbons, including palmitoyl-CoA, S-palmitoyl-N-acetylcysteamine, and palmitoylated proteins. In contrast to PPT2, PPT1 can hydrolyze palmitoylated proteins and palmitoylcysteine. This is Palmitoyl-protein thioesterase 1 (Ppt1) from Mus musculus (Mouse).